The following is a 74-amino-acid chain: uncharacterized protein (74 aa).

This is an uncharacterized protein from Rickettsia conorii (strain ATCC VR-613 / Malish 7).